Consider the following 338-residue polypeptide: Dihydroorotate dehydrogenase (quinone) (338 aa).

Residues 68 to 72 (AGMDK) and threonine 92 each bind FMN. Residue lysine 72 coordinates substrate. Position 117–121 (117–121 (NRMGF)) interacts with substrate. Residues serine 147 and asparagine 180 each coordinate FMN. Asparagine 180 is a substrate binding site. Serine 183 (nucleophile) is an active-site residue. Asparagine 185 is a binding site for substrate. 2 residues coordinate FMN: lysine 214 and threonine 242. Residue 243–244 (NT) coordinates substrate. Residues glycine 267, glycine 296, and 317–318 (YT) contribute to the FMN site.

This sequence belongs to the dihydroorotate dehydrogenase family. Type 2 subfamily. Monomer. FMN is required as a cofactor.

Its subcellular location is the cell membrane. It carries out the reaction (S)-dihydroorotate + a quinone = orotate + a quinol. Its pathway is pyrimidine metabolism; UMP biosynthesis via de novo pathway; orotate from (S)-dihydroorotate (quinone route): step 1/1. Catalyzes the conversion of dihydroorotate to orotate with quinone as electron acceptor. This Salinispora arenicola (strain CNS-205) protein is Dihydroorotate dehydrogenase (quinone).